The sequence spans 320 residues: Aspartate carbamoyltransferase catalytic subunit (320 aa).

Residues Arg-68 and Thr-69 each coordinate carbamoyl phosphate. Residue Lys-96 coordinates L-aspartate. Carbamoyl phosphate is bound by residues Arg-118, His-148, and Gln-151. Arg-181 and Arg-236 together coordinate L-aspartate. The carbamoyl phosphate site is built by Gly-277 and Pro-278.

This sequence belongs to the aspartate/ornithine carbamoyltransferase superfamily. ATCase family. As to quaternary structure, heterododecamer (2C3:3R2) of six catalytic PyrB chains organized as two trimers (C3), and six regulatory PyrI chains organized as three dimers (R2).

It carries out the reaction carbamoyl phosphate + L-aspartate = N-carbamoyl-L-aspartate + phosphate + H(+). It participates in pyrimidine metabolism; UMP biosynthesis via de novo pathway; (S)-dihydroorotate from bicarbonate: step 2/3. Catalyzes the condensation of carbamoyl phosphate and aspartate to form carbamoyl aspartate and inorganic phosphate, the committed step in the de novo pyrimidine nucleotide biosynthesis pathway. The protein is Aspartate carbamoyltransferase catalytic subunit of Polaromonas sp. (strain JS666 / ATCC BAA-500).